An 88-amino-acid polypeptide reads, in one-letter code: Small ribosomal subunit protein uS15 (88 aa).

It belongs to the universal ribosomal protein uS15 family. As to quaternary structure, part of the 30S ribosomal subunit. Forms a bridge to the 50S subunit in the 70S ribosome, contacting the 23S rRNA.

In terms of biological role, one of the primary rRNA binding proteins, it binds directly to 16S rRNA where it helps nucleate assembly of the platform of the 30S subunit by binding and bridging several RNA helices of the 16S rRNA. Functionally, forms an intersubunit bridge (bridge B4) with the 23S rRNA of the 50S subunit in the ribosome. In Acidovorax sp. (strain JS42), this protein is Small ribosomal subunit protein uS15.